The chain runs to 44 residues: Photosystem I reaction center subunit IX (44 aa).

The helical transmembrane segment at 9-29 (FVRSAPVVAAIWLSLTAGIII) threads the bilayer.

It belongs to the PsaJ family.

The protein localises to the cellular thylakoid membrane. Functionally, may help in the organization of the PsaE and PsaF subunits. The chain is Photosystem I reaction center subunit IX from Prochlorococcus marinus (strain MIT 9301).